The primary structure comprises 99 residues: Nucleoid-associated protein EbfC (99 aa).

It belongs to the YbaB/EbfC family. Homodimer.

It localises to the cytoplasm. It is found in the nucleoid. Binds to DNA and alters its conformation. May be involved in regulation of gene expression, nucleoid organization and DNA protection. In Borrelia duttonii (strain Ly), this protein is Nucleoid-associated protein EbfC.